The sequence spans 85 residues: ATP synthase subunit c (85 aa).

Transmembrane regions (helical) follow at residues 19 to 39 (LGAA…IGKI) and 62 to 82 (IIAA…CLLV).

It belongs to the ATPase C chain family. As to quaternary structure, F-type ATPases have 2 components, F(1) - the catalytic core - and F(0) - the membrane proton channel. F(1) has five subunits: alpha(3), beta(3), gamma(1), delta(1), epsilon(1). F(0) has three main subunits: a(1), b(2) and c(10-14). The alpha and beta chains form an alternating ring which encloses part of the gamma chain. F(1) is attached to F(0) by a central stalk formed by the gamma and epsilon chains, while a peripheral stalk is formed by the delta and b chains.

It is found in the cell inner membrane. Its function is as follows. F(1)F(0) ATP synthase produces ATP from ADP in the presence of a proton or sodium gradient. F-type ATPases consist of two structural domains, F(1) containing the extramembraneous catalytic core and F(0) containing the membrane proton channel, linked together by a central stalk and a peripheral stalk. During catalysis, ATP synthesis in the catalytic domain of F(1) is coupled via a rotary mechanism of the central stalk subunits to proton translocation. Key component of the F(0) channel; it plays a direct role in translocation across the membrane. A homomeric c-ring of between 10-14 subunits forms the central stalk rotor element with the F(1) delta and epsilon subunits. This is ATP synthase subunit c from Bacteroides fragilis (strain ATCC 25285 / DSM 2151 / CCUG 4856 / JCM 11019 / LMG 10263 / NCTC 9343 / Onslow / VPI 2553 / EN-2).